A 319-amino-acid polypeptide reads, in one-letter code: Nucleotide-binding protein Rru_A3448 (319 aa).

Residues methionine 1–aspartate 34 are disordered. Residue glycine 42–threonine 49 coordinates ATP. Residue aspartate 90–threonine 93 coordinates GTP.

Belongs to the RapZ-like family.

Functionally, displays ATPase and GTPase activities. This chain is Nucleotide-binding protein Rru_A3448, found in Rhodospirillum rubrum (strain ATCC 11170 / ATH 1.1.1 / DSM 467 / LMG 4362 / NCIMB 8255 / S1).